Consider the following 868-residue polypeptide: Protein translocase subunit SecA (868 aa).

ATP is bound by residues glutamine 85, 103–107 (GEGKT), and aspartate 508.

Belongs to the SecA family. In terms of assembly, monomer and homodimer. Part of the essential Sec protein translocation apparatus which comprises SecA, SecYEG and auxiliary proteins SecDF. Other proteins may also be involved.

The protein localises to the cell membrane. It localises to the cytoplasm. It catalyses the reaction ATP + H2O + cellular proteinSide 1 = ADP + phosphate + cellular proteinSide 2.. Its function is as follows. Part of the Sec protein translocase complex. Interacts with the SecYEG preprotein conducting channel. Has a central role in coupling the hydrolysis of ATP to the transfer of proteins into and across the cell membrane, serving as an ATP-driven molecular motor driving the stepwise translocation of polypeptide chains across the membrane. The protein is Protein translocase subunit SecA of Deinococcus radiodurans (strain ATCC 13939 / DSM 20539 / JCM 16871 / CCUG 27074 / LMG 4051 / NBRC 15346 / NCIMB 9279 / VKM B-1422 / R1).